The following is an 89-amino-acid chain: Small ribosomal subunit protein bS20 (89 aa).

2 stretches are compositionally biased toward basic residues: residues 1–10 and 17–29; these read MANIKSKIKS and ARKR…SRVK. Residues 1-29 are disordered; that stretch reads MANIKSKIKSIKTMEKARKRNSMIKSRVK.

It belongs to the bacterial ribosomal protein bS20 family.

In terms of biological role, binds directly to 16S ribosomal RNA. The polypeptide is Small ribosomal subunit protein bS20 (Mycoplasmopsis pulmonis (strain UAB CTIP) (Mycoplasma pulmonis)).